The sequence spans 217 residues: Large ribosomal subunit protein uL1 (217 aa).

This sequence belongs to the universal ribosomal protein uL1 family. As to quaternary structure, part of the 50S ribosomal subunit.

Its function is as follows. Binds directly to 23S rRNA. The L1 stalk is quite mobile in the ribosome, and is involved in E site tRNA release. In terms of biological role, protein L1 is also a translational repressor protein, it controls the translation of the L11 operon by binding to its mRNA. The chain is Large ribosomal subunit protein uL1 from Wolbachia pipientis wMel.